Here is a 1192-residue protein sequence, read N- to C-terminus: Homeodomain-interacting protein kinase 3 (1192 aa).

Lys-27 participates in a covalent cross-link: Glycyl lysine isopeptide (Lys-Gly) (interchain with G-Cter in SUMO); alternate. Residue Lys-27 forms a Glycyl lysine isopeptide (Lys-Gly) (interchain with G-Cter in SUMO2); alternate linkage. Positions 197-525 constitute a Protein kinase domain; the sequence is YEVLDFLGRG…PIETLNHPFV (329 aa). Residues 203-211 and Lys-226 each bind ATP; that span reads LGRGTFGQV. Asp-322 acts as the Proton acceptor in catalysis. Position 359 is a phosphotyrosine (Tyr-359). Residues 767-921 form an interaction with AR region; that stretch reads QNRSNSLQNT…NSMSDDEQES (155 aa). The tract at residues 775–868 is interaction with FAS; that stretch reads NTNIPHSAFI…SPRPSLRECK (94 aa). The disordered stretch occupies residues 799–829; sequence CVDTQDNHTSEGEAGTCREASVRQDSSVSDK. A required for localization to nuclear speckles region spans residues 832 to 988; sequence QTIIIADSPS…ESGLSVDEHM (157 aa). An SUMO interaction motifs (SIM); required for nuclear localization and kinase activity region spans residues 843 to 895; the sequence is AVSVITISSDSDDEETSPRPSLRECKGSLDCEACQSTLNIDRMCSLSSPDSTL. The interaction with UBL1 stretch occupies residues 847-857; sequence ITISSDSDDEE. Residues 889-906 show a composition bias toward low complexity; it reads SSPDSTLSTSSSGQSSPS. 2 disordered regions span residues 889–943 and 956–1023; these read SSPD…PFAE and LGTC…KPAA. Lys-1185 participates in a covalent cross-link: Glycyl lysine isopeptide (Lys-Gly) (interchain with G-Cter in SUMO).

The protein belongs to the protein kinase superfamily. CMGC Ser/Thr protein kinase family. HIPK subfamily. As to quaternary structure, interacts with UBL1/SUMO-1. Interacts with and stabilizes ligand-bound androgen receptor (AR). Interacts with Nkx1-2. Interacts with FAS and DAXX. Probably part of a complex consisting of HIPK3, FAS and FADD. Binds to NR5A1/SF1, SPEN/MINT and RUNX2. Autophosphorylated, but autophosphorylation is not required for catalytic activity. Post-translationally, may be sumoylated. Heart, skeletal muscle, spleen, testis and lung.

It is found in the cytoplasm. The protein localises to the nucleus. The enzyme catalyses L-seryl-[protein] + ATP = O-phospho-L-seryl-[protein] + ADP + H(+). It catalyses the reaction L-threonyl-[protein] + ATP = O-phospho-L-threonyl-[protein] + ADP + H(+). In terms of biological role, serine/threonine-protein kinase involved in transcription regulation, apoptosis and steroidogenic gene expression. Phosphorylates JUN and RUNX2. Seems to negatively regulate apoptosis by promoting FADD phosphorylation. Enhances androgen receptor-mediated transcription. May act as a transcriptional corepressor for NK homeodomain transcription factors. The phosphorylation of NR5A1 activates SF1 leading to increased steroidogenic gene expression upon cAMP signaling pathway stimulation. In osteoblasts, supports transcription activation: phosphorylates RUNX2 that synergizes with SPEN/MINT to enhance FGFR2-mediated activation of the osteocalcin FGF-responsive element (OCFRE). The chain is Homeodomain-interacting protein kinase 3 (Hipk3) from Mus musculus (Mouse).